The chain runs to 372 residues: Fatty acid conjugase FAC2 B (372 aa).

The next 2 helical transmembrane spans lie at 44–64 (YFLF…SNYI) and 74–94 (IVWP…WMIG). Positions 95–99 (HECGH) match the Histidine box-1 motif. The short motif at 131-135 (HRNHH) is the Histidine box-2 element. Helical transmembrane passes span 166-186 (IGLM…YIMF), 217-237 (VLFS…IVTV), and 240-260 (AMPA…ILFA). Residues 304 to 308 (HVIHH) carry the Histidine box-3 motif.

This sequence belongs to the fatty acid desaturase type 1 family. As to expression, expressed exclusively in the developing seeds. Not detected in leaves.

Its subcellular location is the microsome membrane. The catalysed reaction is a (9Z,12Z)-octadecadienoyl-containing glycerolipid + AH2 + O2 = a (8E,10E,12Z)-octadecatrienoyl-containing glycerolipid + A + 2 H2O. It functions in the pathway lipid metabolism; polyunsaturated fatty acid biosynthesis. In terms of biological role, fatty acid conjugase converting 18:2(9Z, 12Z) to calendic acid 18:3(8E, 10E, 12Z). Converts alpha-linolenic acid (18:3(9Z, 12Z, 15Z)) into 18:4(8E, 10E, 12Z, 15Z). Also has weak activity on the mono-unsaturates 16:1(9Z) and 18:1(9Z) producing two conjugated double bonds at delta(8) and delta(10) position. In Calendula officinalis (Pot marigold), this protein is Fatty acid conjugase FAC2 B.